Here is a 788-residue protein sequence, read N- to C-terminus: Putative wall-associated receptor kinase-like 11 (788 aa).

Positions 1–27 are cleaved as a signal peptide; that stretch reads MRCDNNYSFSILFSLLLILILDSKVVS. Residues 28–375 lie on the Extracellular side of the membrane; it reads LSTSCQSKSV…TFNCIGNKTR (348 aa). 9 N-linked (GlcNAc...) asparagine glycosylation sites follow: Asn-65, Asn-80, Asn-121, Asn-159, Asn-233, Asn-253, Asn-278, Asn-295, and Asn-310. Residues 306–369 form an atypical EGF-like region; the sequence is CICNNVTISG…CVNLPGTFNC (64 aa). 3 cysteine pairs are disulfide-bonded: Cys-308-Cys-321, Cys-343-Cys-360, and Cys-354-Cys-369. The N-linked (GlcNAc...) asparagine glycan is linked to Asn-372. The helical transmembrane segment at 376-396 threads the bilayer; the sequence is VTMIGVGSAFGILVLVVGIWW. Residues 397-788 lie on the Cytoplasmic side of the membrane; it reads LRKFLKKRRM…QPLFPHPTWI (392 aa). The 276-residue stretch at 451-726 folds into the Protein kinase domain; the sequence is FSESRILGQG…KVFTDLEKIL (276 aa). ATP contacts are provided by residues 457-465 and Lys-479; that span reads LGQGGQGTV. Tyr-524 is subject to Phosphotyrosine. Asp-576 (proton acceptor) is an active-site residue. Phosphothreonine occurs at positions 610 and 615. At Tyr-623 the chain carries Phosphotyrosine.

The protein belongs to the protein kinase superfamily. Ser/Thr protein kinase family.

Its subcellular location is the membrane. It catalyses the reaction L-seryl-[protein] + ATP = O-phospho-L-seryl-[protein] + ADP + H(+). The enzyme catalyses L-threonyl-[protein] + ATP = O-phospho-L-threonyl-[protein] + ADP + H(+). Putative serine/threonine-protein kinase that may function as a signaling receptor of extracellular matrix component. This Arabidopsis thaliana (Mouse-ear cress) protein is Putative wall-associated receptor kinase-like 11 (WAKL11).